A 342-amino-acid chain; its full sequence is Methylthioribose-1-phosphate isomerase (342 aa).

Substrate is bound by residues 49–51 (RGA), Arg-86, and Gln-187. Asp-228 functions as the Proton donor in the catalytic mechanism. 238–239 (NK) is a binding site for substrate.

Belongs to the eIF-2B alpha/beta/delta subunits family. MtnA subfamily.

It catalyses the reaction 5-(methylsulfanyl)-alpha-D-ribose 1-phosphate = 5-(methylsulfanyl)-D-ribulose 1-phosphate. It participates in amino-acid biosynthesis; L-methionine biosynthesis via salvage pathway; L-methionine from S-methyl-5-thio-alpha-D-ribose 1-phosphate: step 1/6. Its function is as follows. Catalyzes the interconversion of methylthioribose-1-phosphate (MTR-1-P) into methylthioribulose-1-phosphate (MTRu-1-P). The sequence is that of Methylthioribose-1-phosphate isomerase from Serratia proteamaculans (strain 568).